The primary structure comprises 150 residues: 3-hydroxyacyl-[acyl-carrier-protein] dehydratase FabZ (150 aa).

Histidine 54 is a catalytic residue.

It belongs to the thioester dehydratase family. FabZ subfamily.

The protein resides in the cytoplasm. The enzyme catalyses a (3R)-hydroxyacyl-[ACP] = a (2E)-enoyl-[ACP] + H2O. Involved in unsaturated fatty acids biosynthesis. Catalyzes the dehydration of short chain beta-hydroxyacyl-ACPs and long chain saturated and unsaturated beta-hydroxyacyl-ACPs. This chain is 3-hydroxyacyl-[acyl-carrier-protein] dehydratase FabZ, found in Pseudoalteromonas translucida (strain TAC 125).